The following is a 457-amino-acid chain: MDHLPIFCQLRDRDCLIVGGGDVAERKARLMLEAGARLTVNALTFIPQFTVWANEGMLTLVEGPFDETLLDSCWLAIAATDDDTVNQRVSDAAESRRIFCNVVDAPKAASFIMPSIIDRSPLMVAVSSGGTSPVLARLLREKLESLLPQHLGQVARYAGQLRARVKKQFATMGERRRFWEKFFVNDRLAQSLANADEKAVNATTERLFSEPLDHRGEVVLVGAGPGDAGLLTLKGLQQIQQADIVVYDRLVSDDIMNLVRRDADRVFVGKRAGYHCVPQEEINQILLREAQKGKRVVRLKGGDPFIFGRGGEELETLCHAGIPFSVVPGITAASGCSAYSGIPLTHRDYAQSVRLVTGHLKTGGELDWENLAAEKQTLVFYMGLNQAATIQEKLIAFGMQADMPVALVENGTSVKQRVVHGVLTQLGELAQQVESPALIIVGRVVGLRDKLNWFSNY.

The interval 1–204 (MDHLPIFCQL…ADEKAVNATT (204 aa)) is precorrin-2 dehydrogenase /sirohydrochlorin ferrochelatase. NAD(+)-binding positions include 22-23 (DV) and 43-44 (LT). Ser-128 carries the post-translational modification Phosphoserine. The uroporphyrinogen-III C-methyltransferase stretch occupies residues 216 to 457 (GEVVLVGAGP…RDKLNWFSNY (242 aa)). Residue Pro-225 participates in S-adenosyl-L-methionine binding. Asp-248 (proton acceptor) is an active-site residue. Lys-270 (proton donor) is an active-site residue. S-adenosyl-L-methionine-binding positions include 301 to 303 (GGD), Ile-306, 331 to 332 (TA), Met-382, and Gly-411.

In the N-terminal section; belongs to the precorrin-2 dehydrogenase / sirohydrochlorin ferrochelatase family. The protein in the C-terminal section; belongs to the precorrin methyltransferase family.

It carries out the reaction uroporphyrinogen III + 2 S-adenosyl-L-methionine = precorrin-2 + 2 S-adenosyl-L-homocysteine + H(+). The catalysed reaction is precorrin-2 + NAD(+) = sirohydrochlorin + NADH + 2 H(+). It catalyses the reaction siroheme + 2 H(+) = sirohydrochlorin + Fe(2+). Its pathway is cofactor biosynthesis; adenosylcobalamin biosynthesis; precorrin-2 from uroporphyrinogen III: step 1/1. The protein operates within cofactor biosynthesis; adenosylcobalamin biosynthesis; sirohydrochlorin from precorrin-2: step 1/1. It functions in the pathway porphyrin-containing compound metabolism; siroheme biosynthesis; precorrin-2 from uroporphyrinogen III: step 1/1. It participates in porphyrin-containing compound metabolism; siroheme biosynthesis; siroheme from sirohydrochlorin: step 1/1. Its pathway is porphyrin-containing compound metabolism; siroheme biosynthesis; sirohydrochlorin from precorrin-2: step 1/1. Its function is as follows. Multifunctional enzyme that catalyzes the SAM-dependent methylations of uroporphyrinogen III at position C-2 and C-7 to form precorrin-2 via precorrin-1. Then it catalyzes the NAD-dependent ring dehydrogenation of precorrin-2 to yield sirohydrochlorin. Finally, it catalyzes the ferrochelation of sirohydrochlorin to yield siroheme. The chain is Siroheme synthase from Salmonella gallinarum (strain 287/91 / NCTC 13346).